We begin with the raw amino-acid sequence, 246 residues long: Probable transcriptional regulatory protein ESA_01378 (246 aa).

The protein belongs to the TACO1 family.

The protein resides in the cytoplasm. The sequence is that of Probable transcriptional regulatory protein ESA_01378 from Cronobacter sakazakii (strain ATCC BAA-894) (Enterobacter sakazakii).